Consider the following 272-residue polypeptide: uncharacterized protein (272 aa).

Residues Asp71 and Glu163 contribute to the active site.

The protein belongs to the glycosyl hydrolase 25 family.

This is an uncharacterized protein from Escherichia coli O6:H1 (strain CFT073 / ATCC 700928 / UPEC).